The chain runs to 183 residues: MQHTNAPLWRPQSELTPLPDTSTLDWLFDEGSLTRRLTHLSDDGFSVTPLFEGWQTLRDDECAALDLAEGSEGWVREVYLRGHGQAWVFARSVASRSALQGDGLHMDELGSRSLGELLFCDHAFQRRAIEVCHYPEHWLPEGSRAAGLWGRRSRFDRGALSVLVAEIFLPTLWEAVRARPENC.

Substrate-binding residues include Arg76, Leu114, and Glu166.

Belongs to the UbiC family.

The protein localises to the cytoplasm. The catalysed reaction is chorismate = 4-hydroxybenzoate + pyruvate. It participates in cofactor biosynthesis; ubiquinone biosynthesis. Removes the pyruvyl group from chorismate, with concomitant aromatization of the ring, to provide 4-hydroxybenzoate (4HB) for the ubiquinone pathway. This Pseudomonas fluorescens (strain Pf0-1) protein is Probable chorismate pyruvate-lyase 2.